The primary structure comprises 172 residues: Peptide deformylase-like (172 aa).

Glutamate 134 is an active-site residue.

This sequence belongs to the polypeptide deformylase family.

This Rhizobium meliloti (strain 1021) (Ensifer meliloti) protein is Peptide deformylase-like.